A 91-amino-acid chain; its full sequence is Large ribosomal subunit protein bL27 (91 aa).

The protein belongs to the bacterial ribosomal protein bL27 family.

This is Large ribosomal subunit protein bL27 from Deinococcus deserti (strain DSM 17065 / CIP 109153 / LMG 22923 / VCD115).